The primary structure comprises 211 residues: Proteasome subunit beta (211 aa).

Positions 1 to 9 (MSEAETLKG) are cleaved as a propeptide — removed in mature form; by autocatalysis. Thr10 (nucleophile) is an active-site residue.

It belongs to the peptidase T1B family. The 20S proteasome core is composed of 14 alpha and 14 beta subunits that assemble into four stacked heptameric rings, resulting in a barrel-shaped structure. The two inner rings, each composed of seven catalytic beta subunits, are sandwiched by two outer rings, each composed of seven alpha subunits. The catalytic chamber with the active sites is on the inside of the barrel. Has a gated structure, the ends of the cylinder being occluded by the N-termini of the alpha-subunits. Is capped at one or both ends by the proteasome regulatory ATPase, PAN.

The protein localises to the cytoplasm. The enzyme catalyses Cleavage of peptide bonds with very broad specificity.. The formation of the proteasomal ATPase PAN-20S proteasome complex, via the docking of the C-termini of PAN into the intersubunit pockets in the alpha-rings, triggers opening of the gate for substrate entry. Interconversion between the open-gate and close-gate conformations leads to a dynamic regulation of the 20S proteasome proteolysis activity. Functionally, component of the proteasome core, a large protease complex with broad specificity involved in protein degradation. This Methanosphaerula palustris (strain ATCC BAA-1556 / DSM 19958 / E1-9c) protein is Proteasome subunit beta.